The chain runs to 399 residues: Phosphate acyltransferase (399 aa).

The protein belongs to the PlsX family. As to quaternary structure, homodimer. Probably interacts with PlsY.

It is found in the cytoplasm. It carries out the reaction a fatty acyl-[ACP] + phosphate = an acyl phosphate + holo-[ACP]. Its pathway is lipid metabolism; phospholipid metabolism. Catalyzes the reversible formation of acyl-phosphate (acyl-PO(4)) from acyl-[acyl-carrier-protein] (acyl-ACP). This enzyme utilizes acyl-ACP as fatty acyl donor, but not acyl-CoA. This is Phosphate acyltransferase from Rhodobacter capsulatus (Rhodopseudomonas capsulata).